We begin with the raw amino-acid sequence, 335 residues long: Tetraacyldisaccharide 4'-kinase (335 aa).

Residue 59–66 coordinates ATP; that stretch reads TAGGNGKT.

The protein belongs to the LpxK family.

The catalysed reaction is a lipid A disaccharide + ATP = a lipid IVA + ADP + H(+). It functions in the pathway glycolipid biosynthesis; lipid IV(A) biosynthesis; lipid IV(A) from (3R)-3-hydroxytetradecanoyl-[acyl-carrier-protein] and UDP-N-acetyl-alpha-D-glucosamine: step 6/6. Its function is as follows. Transfers the gamma-phosphate of ATP to the 4'-position of a tetraacyldisaccharide 1-phosphate intermediate (termed DS-1-P) to form tetraacyldisaccharide 1,4'-bis-phosphate (lipid IVA). The sequence is that of Tetraacyldisaccharide 4'-kinase from Vibrio vulnificus (strain YJ016).